The primary structure comprises 142 residues: Large ribosomal subunit protein uL11 (142 aa).

The protein belongs to the universal ribosomal protein uL11 family. In terms of assembly, part of the ribosomal stalk of the 50S ribosomal subunit. Interacts with L10 and the large rRNA to form the base of the stalk. L10 forms an elongated spine to which L12 dimers bind in a sequential fashion forming a multimeric L10(L12)X complex. One or more lysine residues are methylated.

Functionally, forms part of the ribosomal stalk which helps the ribosome interact with GTP-bound translation factors. The sequence is that of Large ribosomal subunit protein uL11 from Xanthomonas campestris pv. campestris (strain B100).